The chain runs to 269 residues: Ribosomal RNA small subunit methyltransferase A (269 aa).

S-adenosyl-L-methionine-binding residues include asparagine 11, leucine 13, glycine 37, glutamate 57, aspartate 85, and asparagine 104.

The protein belongs to the class I-like SAM-binding methyltransferase superfamily. rRNA adenine N(6)-methyltransferase family. RsmA subfamily.

It localises to the cytoplasm. The enzyme catalyses adenosine(1518)/adenosine(1519) in 16S rRNA + 4 S-adenosyl-L-methionine = N(6)-dimethyladenosine(1518)/N(6)-dimethyladenosine(1519) in 16S rRNA + 4 S-adenosyl-L-homocysteine + 4 H(+). Specifically dimethylates two adjacent adenosines (A1518 and A1519) in the loop of a conserved hairpin near the 3'-end of 16S rRNA in the 30S particle. May play a critical role in biogenesis of 30S subunits. In Campylobacter hominis (strain ATCC BAA-381 / DSM 21671 / CCUG 45161 / LMG 19568 / NCTC 13146 / CH001A), this protein is Ribosomal RNA small subunit methyltransferase A.